The sequence spans 205 residues: Thiamine-phosphate synthase (205 aa).

4-amino-2-methyl-5-(diphosphooxymethyl)pyrimidine-binding positions include 37–41 and asparagine 69; that span reads QVREK. Mg(2+) contacts are provided by aspartate 70 and aspartate 89. Residue serine 108 coordinates 4-amino-2-methyl-5-(diphosphooxymethyl)pyrimidine. 2-[(2R,5Z)-2-carboxy-4-methylthiazol-5(2H)-ylidene]ethyl phosphate is bound at residue 134–136; sequence TGS. Lysine 137 lines the 4-amino-2-methyl-5-(diphosphooxymethyl)pyrimidine pocket. Residues glycine 165 and 185–186 each bind 2-[(2R,5Z)-2-carboxy-4-methylthiazol-5(2H)-ylidene]ethyl phosphate; that span reads IS.

This sequence belongs to the thiamine-phosphate synthase family. It depends on Mg(2+) as a cofactor.

The catalysed reaction is 2-[(2R,5Z)-2-carboxy-4-methylthiazol-5(2H)-ylidene]ethyl phosphate + 4-amino-2-methyl-5-(diphosphooxymethyl)pyrimidine + 2 H(+) = thiamine phosphate + CO2 + diphosphate. It catalyses the reaction 2-(2-carboxy-4-methylthiazol-5-yl)ethyl phosphate + 4-amino-2-methyl-5-(diphosphooxymethyl)pyrimidine + 2 H(+) = thiamine phosphate + CO2 + diphosphate. It carries out the reaction 4-methyl-5-(2-phosphooxyethyl)-thiazole + 4-amino-2-methyl-5-(diphosphooxymethyl)pyrimidine + H(+) = thiamine phosphate + diphosphate. Its pathway is cofactor biosynthesis; thiamine diphosphate biosynthesis; thiamine phosphate from 4-amino-2-methyl-5-diphosphomethylpyrimidine and 4-methyl-5-(2-phosphoethyl)-thiazole: step 1/1. Its function is as follows. Condenses 4-methyl-5-(beta-hydroxyethyl)thiazole monophosphate (THZ-P) and 2-methyl-4-amino-5-hydroxymethyl pyrimidine pyrophosphate (HMP-PP) to form thiamine monophosphate (TMP). In Clostridium botulinum (strain 657 / Type Ba4), this protein is Thiamine-phosphate synthase.